We begin with the raw amino-acid sequence, 93 residues long: Large ribosomal subunit protein uL23 (93 aa).

Belongs to the universal ribosomal protein uL23 family. Part of the 50S ribosomal subunit. Contacts protein L29, and trigger factor when it is bound to the ribosome.

Functionally, one of the early assembly proteins it binds 23S rRNA. One of the proteins that surrounds the polypeptide exit tunnel on the outside of the ribosome. Forms the main docking site for trigger factor binding to the ribosome. The polypeptide is Large ribosomal subunit protein uL23 (Campylobacter fetus subsp. fetus (strain 82-40)).